Consider the following 300-residue polypeptide: ATP-dependent (S)-NAD(P)H-hydrate dehydratase (300 aa).

A YjeF C-terminal domain is found at 14–293 (LLALFKTVVP…NQIPSVFQTE (280 aa)). Residues glycine 114 and 167 to 173 (NVMEFQR) contribute to the (6S)-NADPHX site. Residues 198–202 (KGAND) and 219–228 (GSGRRCGGQG) contribute to the ATP site. Aspartate 229 contacts (6S)-NADPHX.

The protein belongs to the NnrD/CARKD family. It depends on Mg(2+) as a cofactor.

It catalyses the reaction (6S)-NADHX + ATP = ADP + phosphate + NADH + H(+). The catalysed reaction is (6S)-NADPHX + ATP = ADP + phosphate + NADPH + H(+). Its function is as follows. Catalyzes the dehydration of the S-form of NAD(P)HX at the expense of ATP, which is converted to ADP. Together with NAD(P)HX epimerase, which catalyzes the epimerization of the S- and R-forms, the enzyme allows the repair of both epimers of NAD(P)HX, a damaged form of NAD(P)H that is a result of enzymatic or heat-dependent hydration. The sequence is that of ATP-dependent (S)-NAD(P)H-hydrate dehydratase from Drosophila melanogaster (Fruit fly).